A 309-amino-acid chain; its full sequence is D-allose kinase (309 aa).

Residues glycine 10–histidine 17 and glycine 142–methionine 149 each bind ATP.

This sequence belongs to the ROK (NagC/XylR) family.

The catalysed reaction is D-allose + ATP = D-allose 6-phosphate + ADP + H(+). It functions in the pathway carbohydrate degradation; D-allose degradation. In terms of biological role, catalyzes the phosphorylation of D-allose to D-allose 6-phosphate. Also has low level glucokinase activity in vitro. This is D-allose kinase from Escherichia coli (strain K12).